The sequence spans 121 residues: Autophagy-related protein 8 (121 aa).

The Phosphatidylethanolamine amidated glycine moiety is linked to residue Gly116. The propeptide at 117-121 (DFETA) is removed in mature form.

Belongs to the ATG8 family. In terms of processing, the C-terminal 5 residues are removed to expose Gly-116 at the C-terminus. The C-terminal Gly is then amidated with phosphatidylethanolamine by an activating system similar to that for ubiquitin.

It is found in the cytoplasmic vesicle. The protein localises to the autophagosome membrane. The protein resides in the vacuole membrane. Ubiquitin-like modifier involved in autophagosome formation. With cpr-1/atg4, mediates the delivery of the autophagosomes to the vacuole via the microtubule cytoskeleton. Required for selective autophagic degradation of the nucleus (nucleophagy) as well as for mitophagy which contributes to regulate mitochondrial quantity and quality by eliminating the mitochondria to a basal level to fulfill cellular energy requirements and preventing excess ROS production. Also participates in membrane fusion events that take place in the early secretory pathway. Also involved in endoplasmic reticulum-specific autophagic process and is essential for the survival of cells subjected to severe ER stress. The apg-6/atg8-PE conjugate mediates tethering between adjacent membranes and stimulates membrane hemifusion, leading to expansion of the autophagosomal membrane during autophagy. This chain is Autophagy-related protein 8 (apg-6), found in Neurospora crassa (strain ATCC 24698 / 74-OR23-1A / CBS 708.71 / DSM 1257 / FGSC 987).